An 868-amino-acid chain; its full sequence is Hopanoid transporter HpnN (868 aa).

12 helical membrane-spanning segments follow: residues F16–Y36, G273–L293, I298–L318, L326–F346, Y370–L390, I403–L423, I452–M472, I710–W730, A740–I760, L762–F782, A805–H825, and L834–M854. Residues I299–L425 form the SSD domain.

The protein belongs to the resistance-nodulation-cell division (RND) (TC 2.A.6) family. MmpL subfamily.

The protein resides in the cell inner membrane. Its function is as follows. Essential for hopanoid transport from the cytoplasmic to the outer membrane. Required for the C(35) hopanoid, bacteriohopanetetrol, to remain localized to the mother cell type. The chain is Hopanoid transporter HpnN from Rhodopseudomonas palustris (strain TIE-1).